We begin with the raw amino-acid sequence, 791 residues long: Cytochrome c oxidase polypeptide I+III (791 aa).

The interval 1–473 (MAITAKPKAG…LLSTIGAYIL (473 aa)) is COX1. The helical transmembrane segment at 29-49 (LMYTATAFFAFALAGVFSLLI) threads the bilayer. H73 is a Fe(II)-heme a binding site. The next 17 membrane-spanning stretches (helical) occupy residues 78-98 (LFFF…VPLM), 111-131 (AFSY…YFFP), 155-175 (FYLA…ANFV), 201-221 (ASVL…LVLL), 244-264 (FFWF…LGIL), 282-302 (MVWA…HHMF), 312-332 (IAFA…LFNI), 347-367 (LYWV…GVML), 381-401 (FVVA…AFAG), 423-443 (FWLF…LGYL), 464-484 (LLST…IYTM), 566-586 (FAFF…WVFL), 617-637 (AWMG…ILIA), 657-677 (LWLA…VHFA), 691-711 (FGLL…SWEF), 729-749 (FFTI…GLIL), and 771-791 (SMYW…FYVW). Cu cation is bound by residues H250, Y254, H299, and H300. Positions 250-254 (HPTVY) form a cross-link, 1'-histidyl-3'-tyrosine (His-Tyr). H385 provides a ligand contact to heme a3. A Fe(II)-heme a-binding site is contributed by H387. Positions 545-791 (DPAHIHLPNS…LVIVTIFYVW (247 aa)) are COX3.

It in the N-terminal section; belongs to the heme-copper respiratory oxidase family. This sequence in the C-terminal section; belongs to the cytochrome c oxidase subunit 3 family. As to quaternary structure, possibly a heterodimer of A-protein (contains: cytochrome c oxidase subunits I and III) and subunit II. The A-protein could also present a precursor form of subunits I and III. The cofactor is Cu(2+). Requires heme as cofactor.

Its subcellular location is the cell membrane. It carries out the reaction 4 Fe(II)-[cytochrome c] + O2 + 8 H(+)(in) = 4 Fe(III)-[cytochrome c] + 2 H2O + 4 H(+)(out). The protein operates within energy metabolism; oxidative phosphorylation. Cytochrome c oxidase is the component of the respiratory chain that catalyzes the reduction of oxygen to water. Subunits 1-3 form the functional core of the enzyme complex. Co I is the catalytic subunit of the enzyme. Electrons originating in cytochrome c are transferred via the copper A center of subunit 2 and heme a of subunit 1 to the bimetallic center formed by heme a3 and copper B. This cytochrome c oxidase shows proton pump activity across the membrane in addition to the electron transfer. This is Cytochrome c oxidase polypeptide I+III (caaA) from Thermus thermophilus (strain ATCC 27634 / DSM 579 / HB8).